The following is a 711-amino-acid chain: Acyl-CoA dehydrogenase FadE34 (711 aa).

Belongs to the acyl-CoA dehydrogenase family. As to quaternary structure, homodimer. FAD is required as a cofactor.

It catalyses the reaction 3-oxochol-4-en-24-oyl-CoA + A = (22E)-3-oxochola-4,22-dien-24-oyl-CoA + AH2. It carries out the reaction 3beta-hydroxy-chol-5-ene-24-oyl-CoA + A = 3beta-hydroxy-chol-5,22-dien-24-oyl-CoA + AH2. It functions in the pathway steroid metabolism; cholesterol degradation. Functionally, involved in the second cycle of side chain dehydrogenation in the beta-oxidation of cholesterol catabolism. It contributes partly to the virulence by increasing the efficiency of beta-oxidation. Catalyzes the dehydrogenation of the five-carbon steroid side chain of 3-oxo-chol-4-en-24-oyl-CoA (3-OCO-CoA) to yield 3-oxochol-4,22-dien-24-oyl-CoA. Can also use 3beta-hydroxy-chol-5-ene-24-oyl-CoA, and shows weak activity with cholyl-CoA and deoxycholyl-CoA. This Mycobacterium tuberculosis (strain ATCC 25618 / H37Rv) protein is Acyl-CoA dehydrogenase FadE34 (fadE34).